The sequence spans 300 residues: Ribosomal protein L11 methyltransferase (300 aa).

4 residues coordinate S-adenosyl-L-methionine: Thr-152, Gly-173, Asp-195, and Asn-234.

The protein belongs to the methyltransferase superfamily. PrmA family.

It is found in the cytoplasm. The enzyme catalyses L-lysyl-[protein] + 3 S-adenosyl-L-methionine = N(6),N(6),N(6)-trimethyl-L-lysyl-[protein] + 3 S-adenosyl-L-homocysteine + 3 H(+). In terms of biological role, methylates ribosomal protein L11. In Burkholderia ambifaria (strain ATCC BAA-244 / DSM 16087 / CCUG 44356 / LMG 19182 / AMMD) (Burkholderia cepacia (strain AMMD)), this protein is Ribosomal protein L11 methyltransferase.